The sequence spans 177 residues: Cytidylate kinase (177 aa).

Position 7 to 15 (7 to 15) interacts with ATP; it reads GSPGSGTTT.

Belongs to the cytidylate kinase family. Type 2 subfamily.

The protein resides in the cytoplasm. It carries out the reaction CMP + ATP = CDP + ADP. It catalyses the reaction dCMP + ATP = dCDP + ADP. This is Cytidylate kinase from Methanocorpusculum labreanum (strain ATCC 43576 / DSM 4855 / Z).